Consider the following 533-residue polypeptide: Di/tripeptide-binding protein 3 (533 aa).

Residues 1–24 (MRKILPLRAWLAAGLILGSPFSHA) form the signal peptide.

The protein belongs to the bacterial solute-binding protein 5 family. In terms of assembly, the complex is composed of two ATP-binding proteins (DppD and DppF), two transmembrane proteins (DppB and DppC) and a solute-binding protein (DppA3). Five orthologous SBPs (DppA1-A5) are present in P.aeruginosa, which increases the substrate specificity of the DppBCDF transporter.

In terms of biological role, part of the ABC transporter DppABCDF involved in the uptake of various di/tripeptides. Prefers dipeptides with acidic residues at the C-terminal end. Involved in the uptake of phaseolotoxin, a toxic tripeptide inhibiting the enzyme ornithine carbamoyltransferase. The protein is Di/tripeptide-binding protein 3 of Pseudomonas aeruginosa (strain UCBPP-PA14).